A 92-amino-acid polypeptide reads, in one-letter code: Long neurotoxin 469 (92 aa).

Residues 1–21 (MKTLLLTLVVVTIVCLDLGDS) form the signal peptide. 5 disulfide bridges follow: C24-C41, C34-C62, C47-C51, C66-C77, and C78-C83.

Belongs to the three-finger toxin family. Long-chain subfamily. Type II alpha-neurotoxin sub-subfamily. Expressed by the venom gland.

Its subcellular location is the secreted. Its function is as follows. Binds with high affinity to muscular (alpha-1/CHRNA1) and neuronal (alpha-7/CHRNA7) nicotinic acetylcholine receptor (nAChR) and inhibits acetylcholine from binding to the receptor, thereby impairing neuromuscular and neuronal transmission. This Drysdalia coronoides (White-lipped snake) protein is Long neurotoxin 469.